We begin with the raw amino-acid sequence, 240 residues long: Biosynthetic peptidoglycan transglycosylase (240 aa).

The chain crosses the membrane as a helical span at residues 9-31 (FLNVVKWFAIASVLLVLLFRVVP).

Belongs to the glycosyltransferase 51 family.

The protein resides in the cell inner membrane. It carries out the reaction [GlcNAc-(1-&gt;4)-Mur2Ac(oyl-L-Ala-gamma-D-Glu-L-Lys-D-Ala-D-Ala)](n)-di-trans,octa-cis-undecaprenyl diphosphate + beta-D-GlcNAc-(1-&gt;4)-Mur2Ac(oyl-L-Ala-gamma-D-Glu-L-Lys-D-Ala-D-Ala)-di-trans,octa-cis-undecaprenyl diphosphate = [GlcNAc-(1-&gt;4)-Mur2Ac(oyl-L-Ala-gamma-D-Glu-L-Lys-D-Ala-D-Ala)](n+1)-di-trans,octa-cis-undecaprenyl diphosphate + di-trans,octa-cis-undecaprenyl diphosphate + H(+). The protein operates within cell wall biogenesis; peptidoglycan biosynthesis. Functionally, peptidoglycan polymerase that catalyzes glycan chain elongation from lipid-linked precursors. This is Biosynthetic peptidoglycan transglycosylase from Pseudomonas fluorescens (strain SBW25).